An 866-amino-acid polypeptide reads, in one-letter code: Leucine--tRNA ligase (866 aa).

The 'HIGH' region motif lies at 42–52; it reads PYPSGKLHMGH. The short motif at 630 to 634 is the 'KMSKS' region element; it reads KMSKS. K633 contacts ATP.

It belongs to the class-I aminoacyl-tRNA synthetase family.

It localises to the cytoplasm. It catalyses the reaction tRNA(Leu) + L-leucine + ATP = L-leucyl-tRNA(Leu) + AMP + diphosphate. This Laribacter hongkongensis (strain HLHK9) protein is Leucine--tRNA ligase.